Reading from the N-terminus, the 428-residue chain is Enolase 3 (428 aa).

Gln-163 provides a ligand contact to (2R)-2-phosphoglycerate. Glu-205 serves as the catalytic Proton donor. Residues Asp-242, Glu-286, and Asp-313 each coordinate Mg(2+). Positions 338, 367, 368, and 389 each coordinate (2R)-2-phosphoglycerate. Catalysis depends on Lys-338, which acts as the Proton acceptor.

Belongs to the enolase family. It depends on Mg(2+) as a cofactor.

It is found in the cytoplasm. Its subcellular location is the secreted. It localises to the cell surface. It catalyses the reaction (2R)-2-phosphoglycerate = phosphoenolpyruvate + H2O. The protein operates within carbohydrate degradation; glycolysis; pyruvate from D-glyceraldehyde 3-phosphate: step 4/5. Its function is as follows. Catalyzes the reversible conversion of 2-phosphoglycerate (2-PG) into phosphoenolpyruvate (PEP). It is essential for the degradation of carbohydrates via glycolysis. This chain is Enolase 3, found in Lactobacillus johnsonii (strain CNCM I-12250 / La1 / NCC 533).